We begin with the raw amino-acid sequence, 250 residues long: Endomucin (250 aa).

An N-terminal signal peptide occupies residues 1–20 (MRLLQVTALFFLLSNSLCRG). Low complexity-rich tracts occupy residues 24–38 (KALT…SATT) and 45–60 (TNKS…TTNS). 2 disordered regions span residues 24-83 (KALT…ETTT) and 105-153 (NAVS…LTTA). N-linked (GlcNAc...) asparagine glycans are attached at residues N46, N115, and N119. Composition is skewed to polar residues over residues 105-135 (NAVS…NQLP) and 143-153 (TETPSASLTTA). The chain crosses the membrane as a helical span at residues 180–200 (VILPVVIALIVITVLVFTLVG). Residues 210-250 (PGTPESGNDQPQSDKESVKLLTVKTISHESGEHSAQGKAKN) are disordered. S226 carries the phosphoserine modification.

Highly O-glycosylated. Sialic acid-rich glycoprotein.

It is found in the membrane. Functionally, endothelial sialomucin, also called endomucin or mucin-like sialoglycoprotein, which interferes with the assembly of focal adhesion complexes and inhibits interaction between cells and the extracellular matrix. This chain is Endomucin (Emcn), found in Rattus norvegicus (Rat).